We begin with the raw amino-acid sequence, 556 residues long: Oxygen-dependent choline dehydrogenase (556 aa).

4 to 33 (DYIIIGAGSAGNVLATRLTEDPNTSVLLLE) serves as a coordination point for FAD. Residue H473 is the Proton acceptor of the active site.

This sequence belongs to the GMC oxidoreductase family. The cofactor is FAD.

It catalyses the reaction choline + A = betaine aldehyde + AH2. It carries out the reaction betaine aldehyde + NAD(+) + H2O = glycine betaine + NADH + 2 H(+). It participates in amine and polyamine biosynthesis; betaine biosynthesis via choline pathway; betaine aldehyde from choline (cytochrome c reductase route): step 1/1. In terms of biological role, involved in the biosynthesis of the osmoprotectant glycine betaine. Catalyzes the oxidation of choline to betaine aldehyde and betaine aldehyde to glycine betaine at the same rate. This is Oxygen-dependent choline dehydrogenase from Escherichia coli O139:H28 (strain E24377A / ETEC).